The sequence spans 350 residues: Phenylalanine--tRNA ligase alpha subunit (350 aa).

Glutamate 257 contacts Mg(2+).

The protein belongs to the class-II aminoacyl-tRNA synthetase family. Phe-tRNA synthetase alpha subunit type 1 subfamily. As to quaternary structure, tetramer of two alpha and two beta subunits. Requires Mg(2+) as cofactor.

Its subcellular location is the cytoplasm. It catalyses the reaction tRNA(Phe) + L-phenylalanine + ATP = L-phenylalanyl-tRNA(Phe) + AMP + diphosphate + H(+). This Listeria welshimeri serovar 6b (strain ATCC 35897 / DSM 20650 / CCUG 15529 / CIP 8149 / NCTC 11857 / SLCC 5334 / V8) protein is Phenylalanine--tRNA ligase alpha subunit.